The following is a 188-amino-acid chain: Ion-translocating oxidoreductase complex subunit B (188 aa).

The tract at residues 1 to 23 (MIEAAVSMSALGLGLGLLLGVAA) is hydrophobic. One can recognise a 4Fe-4S domain in the interval 29–88 (ESPPILDAIEGILPGTNCGACGYPGCRGLAEAMSEGAAPVTACAPGGRDVALALAAIVET). [4Fe-4S] cluster contacts are provided by Cys46, Cys49, Cys54, Cys71, Cys113, Cys116, Cys119, Cys123, Cys143, Cys146, Cys149, and Cys153. 4Fe-4S ferredoxin-type domains follow at residues 104–133 (TVAF…GANR) and 134–163 (QIHT…ARVK).

It belongs to the 4Fe4S bacterial-type ferredoxin family. RnfB subfamily. In terms of assembly, the complex is composed of six subunits: RnfA, RnfB, RnfC, RnfD, RnfE and RnfG. It depends on [4Fe-4S] cluster as a cofactor.

It localises to the cellular chromatophore membrane. Functionally, part of a membrane-bound complex that couples electron transfer with translocation of ions across the membrane. This chain is Ion-translocating oxidoreductase complex subunit B, found in Cereibacter sphaeroides (strain ATCC 17029 / ATH 2.4.9) (Rhodobacter sphaeroides).